A 2254-amino-acid polypeptide reads, in one-letter code: Genome polyprotein (2254 aa).

In terms of domain architecture, SF3 helicase spans 438–592 (QTTINELAQL…EQWLVDNPGR (155 aa)). 464 to 471 (GPPGIGKT) is a binding site for ATP. The residue at position 956 (tyrosine 956) is an O-(5'-phospho-RNA)-tyrosine. Residues 1041–1196 (GDTYDSEGRG…KKLVSRVQTK (156 aa)) enclose the Peptidase C24 domain. Residues histidine 1078, aspartate 1099, and cysteine 1163 each act as for 3CLpro activity in the active site. In terms of domain architecture, RdRp catalytic spans 1434 to 1559 (RVLYCLDYSK…GLTPATASIM (126 aa)). Residues 1714–1742 (PAPTRSVASNPEGTQNSNESRPVQPAGPM) form a disordered region. Residues 1719-1734 (SVASNPEGTQNSNESR) are compositionally biased toward polar residues.

Homodimer. Homomultimer. As to quaternary structure, interacts with host IEF4E; this interaction plays a role in translation of viral proteins. Specific enzymatic cleavages in vivo yield mature proteins. Pro-Pol is first autocatalytically cleaved, then processes the whole polyprotein. Post-translationally, VPg is uridylylated by the polymerase and is covalently attached to the 5'-end of the polyadenylated genomic and subgenomic RNAs. This uridylylated form acts as a nucleotide-peptide primer for the polymerase.

Its subcellular location is the virion. The protein resides in the host cytoplasm. The enzyme catalyses a ribonucleoside 5'-triphosphate + H2O = a ribonucleoside 5'-diphosphate + phosphate + H(+). It carries out the reaction RNA(n) + a ribonucleoside 5'-triphosphate = RNA(n+1) + diphosphate. It catalyses the reaction Endopeptidase with a preference for cleavage when the P1 position is occupied by Glu-|-Xaa and the P1' position is occupied by Gly-|-Yaa.. Its function is as follows. Together with NTPase and NS4, initiates the formation of the replication complex. Induces the proliferation of the host smooth ER membranes forming long tubular structures. These remodeled membranes probably form the viral factories that contain the replication complex. Displays NTPase activity, but no helicase activity. Induces the formation of convoluted membranes derived from the host ER. These remodeled membranes probably form the viral factories that contain the replication complex. Together with NS2 and NS4, initiates the formation of the replication complex. In terms of biological role, probable key protein responsible for the formation of membrane alterations by the virus. Induces the formation of convoluted membranes derived from the host ER. These remodeled membranes probably form the viral factories that contain the replication complex. Together with NS2 and NTPase, initiates the formation of the replication complex. Functionally, viral genome-linked protein is covalently linked to the 5'-end of the positive-strand, negative-strand genomic RNAs and subgenomic RNA. Acts as a genome-linked replication primer. May recruit ribosome to viral RNA thereby promoting viral proteins translation. Interacts with host translation initiation complex to allow the translation of viral proteins. Its function is as follows. Protease-polymerase p76 processes the polyprotein: Pro-Pol is first released by autocleavage, then all other proteins are cleaved. Cleaves host translation initiation factor eIF4G1, eIF4G2 and PABP1 thereby inducing a shutdown of host protein synthesis. This shutdown may not prevent viral mRNA from being translated since viral Vpg replaces the cap. It is also an RNA-directed RNA polymerase which replicates genomic and antigenomic viral RNA by recognizing specific signals. Also transcribes a subgenomic mRNA by initiating RNA synthesis internally on antigenomic RNA. This sgRNA codes for structural proteins. Catalyzes the covalent attachment VPg with viral RNAs. Capsid protein self assembles to form an icosahedral capsid with a T=3 symmetry, about 38 nm in diameter, and consisting of 180 capsid proteins. The capsid encapsulate the genomic RNA and VP2 proteins. Attaches virion to target cells, inducing endocytosis of the viral particle. Acidification of the endosome induces conformational change of capsid protein thereby injecting virus genomic RNA into host cytoplasm. The sequence is that of Genome polyprotein from Porcine enteric sapovirus (isolate Swine/United States/Cowden/1980) (Sw/SV/Cowden/1980/US).